We begin with the raw amino-acid sequence, 166 residues long: Transcriptional repressor NrdR (166 aa).

Residues 3 to 34 fold into a zinc finger; it reads CPFCHFVETDVIDTRKLYEGEVIRRRRRCRAC. Residues 49-139 enclose the ATP-cone domain; sequence LMVVKKDGTR…VYRAFTDIGK (91 aa).

It belongs to the NrdR family. Zn(2+) is required as a cofactor.

Its function is as follows. Negatively regulates transcription of bacterial ribonucleotide reductase nrd genes and operons by binding to NrdR-boxes. This Chloroflexus aurantiacus (strain ATCC 29364 / DSM 637 / Y-400-fl) protein is Transcriptional repressor NrdR.